A 163-amino-acid polypeptide reads, in one-letter code: MMSSKVQERDLIVSKIKDGIVIDHIPAGRALIVLRVLKLKGGEGRVALVMNADSRRLGRKDIVKIEGKELSNDELNLVSLIAPTATINIIRDYSVIKKFQVKLPETVKGVVKCRNPKCITNQPREDAVPTFRVLHLDQPILQCQYCGTYLTIDDINAQLTGER.

Zn(2+) is bound by residues Cys-113, Cys-118, Cys-143, and Cys-146.

The protein belongs to the PyrI family. In terms of assembly, contains catalytic and regulatory chains. Requires Zn(2+) as cofactor.

In terms of biological role, involved in allosteric regulation of aspartate carbamoyltransferase. This Caldivirga maquilingensis (strain ATCC 700844 / DSM 13496 / JCM 10307 / IC-167) protein is Aspartate carbamoyltransferase regulatory chain.